The chain runs to 632 residues: Cytosolic Fe-S cluster assembly factor NAR1 (632 aa).

A [4Fe-4S] cluster-binding site is contributed by C20. Residues 27 to 53 form a disordered region; the sequence is LPAKPEDSSNPYEVTTEDKAAASQPPP. The [4Fe-4S] cluster site is built by C62, C65, and C68. Disordered regions lie at residues 99–119 and 210–231; these read WQTQNGTNGTNGTNGTTNGHS and LSPETSNPSTKPGSEGAIDTTP. A compositionally biased stretch (low complexity) spans 101-119; that stretch reads TQNGTNGTNGTNGTTNGHS. Polar residues predominate over residues 211–221; that stretch reads SPETSNPSTKP. The [4Fe-4S] cluster site is built by C240, C295, C486, and C490. The tract at residues 542-573 is disordered; the sequence is GSDSEEEKVDQDGDQNMQDATTNGHTSEPDIV. A compositionally biased stretch (acidic residues) spans 544-554; sequence DSEEEKVDQDG. A compositionally biased stretch (polar residues) spans 555–567; it reads DQNMQDATTNGHT.

Belongs to the NARF family.

Functionally, component of the cytosolic Fe/S protein assembly machinery. Required for maturation of extramitochondrial Fe/S proteins. May play a role in the transfer of pre-assembled Fe/S clusters to target apoproteins. In Phaeosphaeria nodorum (strain SN15 / ATCC MYA-4574 / FGSC 10173) (Glume blotch fungus), this protein is Cytosolic Fe-S cluster assembly factor NAR1 (NAR1).